Here is a 510-residue protein sequence, read N- to C-terminus: NAD(P) transhydrogenase subunit alpha (510 aa).

At 1–401 (MRIGIPRERL…EEKCTCSPWR (401 aa)) the chain is on the cytoplasmic side. Residues 120 to 122 (RIS), valine 175, 195 to 197 (DTR), glutamate 238, and leucine 257 each bind NAD(+). A run of 2 helical transmembrane segments spans residues 402 to 422 (KYALMALAIILFGWMASVAPK) and 423 to 443 (EFLGHFTVFALACVVGYYVVW). Over 444–452 (NVSHALHTP) the chain is Cytoplasmic. A helical transmembrane segment spans residues 453–473 (LMSVTNAISGIIVVGALLQIG). Over 474–476 (QGG) the chain is Periplasmic. Residues 477–497 (WVSFLSFIAVLIASINIFGGF) form a helical membrane-spanning segment. Residues 498–510 (TVTQRMLKMFRKN) lie on the Cytoplasmic side of the membrane.

It belongs to the AlaDH/PNT family. In terms of assembly, heterodimer of an alpha (PntA) and a beta (PntB) chain. Alpha subunit serves as the dimerization unit.

It is found in the cell inner membrane. It carries out the reaction NAD(+) + NADPH + H(+)(in) = NADH + NADP(+) + H(+)(out). In terms of biological role, the transhydrogenation between NADH and NADP is coupled to respiration and ATP hydrolysis and functions as a proton pump across the membrane. This is NAD(P) transhydrogenase subunit alpha (pntA) from Escherichia coli (strain K12).